The sequence spans 166 residues: Regulator of ribonuclease activity A (166 aa).

This sequence belongs to the RraA family. Homotrimer. Binds to both RNA-binding sites in the C-terminal region of Rne and to RhlB.

It localises to the cytoplasm. Functionally, globally modulates RNA abundance by binding to RNase E (Rne) and regulating its endonucleolytic activity. Can modulate Rne action in a substrate-dependent manner by altering the composition of the degradosome. Modulates RNA-binding and helicase activities of the degradosome. In Mannheimia succiniciproducens (strain KCTC 0769BP / MBEL55E), this protein is Regulator of ribonuclease activity A.